Consider the following 312-residue polypeptide: DNA primase small subunit PriS (312 aa).

Residues Asp-88, Asp-90, and Asp-215 contribute to the active site.

Belongs to the eukaryotic-type primase small subunit family. As to quaternary structure, heterodimer of a small subunit (PriS) and a large subunit (PriL). It depends on Mg(2+) as a cofactor. Requires Mn(2+) as cofactor.

In terms of biological role, catalytic subunit of DNA primase, an RNA polymerase that catalyzes the synthesis of short RNA molecules used as primers for DNA polymerase during DNA replication. The small subunit contains the primase catalytic core and has DNA synthesis activity on its own. Binding to the large subunit stabilizes and modulates the activity, increasing the rate of DNA synthesis while decreasing the length of the DNA fragments, and conferring RNA synthesis capability. The DNA polymerase activity may enable DNA primase to also catalyze primer extension after primer synthesis. May also play a role in DNA repair. This is DNA primase small subunit PriS from Pyrobaculum aerophilum (strain ATCC 51768 / DSM 7523 / JCM 9630 / CIP 104966 / NBRC 100827 / IM2).